The following is a 68-amino-acid chain: Large ribosomal subunit protein bL35 (68 aa).

This sequence belongs to the bacterial ribosomal protein bL35 family.

The chain is Large ribosomal subunit protein bL35 from Rickettsia felis (strain ATCC VR-1525 / URRWXCal2) (Rickettsia azadi).